Here is a 114-residue protein sequence, read N- to C-terminus: uncharacterized protein (114 aa).

Residues 18–29 (TRKRNSHKKVTK) are compositionally biased toward basic residues. Disordered stretches follow at residues 18 to 47 (TRKR…RRTG) and 65 to 108 (SRPR…KLLN). A compositionally biased stretch (basic and acidic residues) spans 30 to 41 (RAVEKRKQDSTR).

This is an uncharacterized protein from Homo sapiens (Human).